The primary structure comprises 433 residues: MSDIIYIEGREILDSRGNPTVEVEVQLSDFSYGRACVPSGASTGEYEALEMRDGDKSRYMGKGVLKAVDQVNTVIAEELDGADALDQAEIDNMLINLDGTENKSKLGANAMLGVSMAVARAAADSLGLPLYRYLGGVHAMQMPVPMANIINGGRHSDNKIDFQEYMIMPVGAPSIREGIRMTAEVFHALKDILKKEGHVTAVGDEGGFAPNIENVQALDYIMKAIEKAGYKPGKDVVIALDCASSELFDAGDRKGYKFWKSEPSKILNADEMVDLFKDWISKYPIVSIEDPLDQNDWEGYAKMTKELGNQIQIVGDDFFVTNTKRLARGIEEGACNSILIKLNQIGTVTETIDAVRMAQKAGYTAVISHRSGETEDAFIADLAVALETGQIKTGSMSRSDRIAKYNQLMRIEDELGYNARYAGMATFANLIKK.

Position 163 (Gln163) interacts with (2R)-2-phosphoglycerate. Residue Glu205 is the Proton donor of the active site. Mg(2+) contacts are provided by Asp241, Glu289, and Asp316. The (2R)-2-phosphoglycerate site is built by Lys341, Arg370, Ser371, and Lys392. The active-site Proton acceptor is Lys341.

It belongs to the enolase family. It depends on Mg(2+) as a cofactor.

It localises to the cytoplasm. Its subcellular location is the secreted. The protein resides in the cell surface. The enzyme catalyses (2R)-2-phosphoglycerate = phosphoenolpyruvate + H2O. It functions in the pathway carbohydrate degradation; glycolysis; pyruvate from D-glyceraldehyde 3-phosphate: step 4/5. Its function is as follows. Catalyzes the reversible conversion of 2-phosphoglycerate (2-PG) into phosphoenolpyruvate (PEP). It is essential for the degradation of carbohydrates via glycolysis. In Treponema denticola (strain ATCC 35405 / DSM 14222 / CIP 103919 / JCM 8153 / KCTC 15104), this protein is Enolase.